Consider the following 314-residue polypeptide: Olfactory receptor 52B4 (314 aa).

The Extracellular portion of the chain corresponds to methionine 1–methionine 27. Asparagine 5 is a glycosylation site (N-linked (GlcNAc...) asparagine). A helical membrane pass occupies residues tryptophan 28–isoleucine 48. At phenylalanine 49 to serine 56 the chain is on the cytoplasmic side. A helical transmembrane segment spans residues leucine 57–threonine 77. Topologically, residues cysteine 78–threonine 101 are extracellular. Cysteine 99 and cysteine 191 form a disulfide bridge. The helical transmembrane segment at glutamine 102–phenylalanine 122 threads the bilayer. The Cytoplasmic segment spans residues aspartate 123 to alanine 141. The chain crosses the membrane as a helical span at residues leucine 142–isoleucine 162. The Extracellular portion of the chain corresponds to phenylalanine 163–isoleucine 198. A helical transmembrane segment spans residues tryptophan 199–serine 219. The Cytoplasmic portion of the chain corresponds to tyrosine 220–alanine 239. The helical transmembrane segment at leucine 240–threonine 260 threads the bilayer. The Extracellular segment spans residues isoleucine 261 to histidine 275. The helical transmembrane segment at isoleucine 276–isoleucine 296 threads the bilayer. Over lysine 297 to lysine 314 the chain is Cytoplasmic.

It belongs to the G-protein coupled receptor 1 family.

The protein localises to the cell membrane. In terms of biological role, odorant receptor. The sequence is that of Olfactory receptor 52B4 (OR52B4) from Homo sapiens (Human).